We begin with the raw amino-acid sequence, 274 residues long: Rhamnulose-1-phosphate aldolase (274 aa).

Glu117 is an active-site residue. His141, His143, and His212 together coordinate Zn(2+).

This sequence belongs to the aldolase class II family. RhaD subfamily. In terms of assembly, homotetramer. Zn(2+) is required as a cofactor.

The protein resides in the cytoplasm. The catalysed reaction is L-rhamnulose 1-phosphate = (S)-lactaldehyde + dihydroxyacetone phosphate. It participates in carbohydrate degradation; L-rhamnose degradation; glycerone phosphate from L-rhamnose: step 3/3. Catalyzes the reversible cleavage of L-rhamnulose-1-phosphate to dihydroxyacetone phosphate (DHAP) and L-lactaldehyde. This Shigella sonnei (strain Ss046) protein is Rhamnulose-1-phosphate aldolase.